Here is a 29-residue protein sequence, read N- to C-terminus: GIPTCGETCTLGTCNTPGCTCSWPICTKN.

Residues 1 to 29 (GIPTCGETCTLGTCNTPGCTCSWPICTKN) constitute a cross-link (cyclopeptide (Gly-Asn)). 3 disulfide bridges follow: C5-C19, C9-C21, and C14-C26.

It belongs to the cyclotide family. Moebius subfamily. This is a cyclic peptide.

Functionally, probably participates in a plant defense mechanism. This Melicytus dentatus (Tree violet) protein is Cyclotide mden-A.